A 359-amino-acid chain; its full sequence is DNA polymerase IV (359 aa).

Positions 7–188 (IIHIDMDAFY…IPIGKFFGVG (182 aa)) constitute a UmuC domain. The Mg(2+) site is built by Asp11 and Asp106. Glu107 is a catalytic residue.

This sequence belongs to the DNA polymerase type-Y family. Monomer. Requires Mg(2+) as cofactor.

It localises to the cytoplasm. It catalyses the reaction DNA(n) + a 2'-deoxyribonucleoside 5'-triphosphate = DNA(n+1) + diphosphate. Functionally, poorly processive, error-prone DNA polymerase involved in untargeted mutagenesis. Copies undamaged DNA at stalled replication forks, which arise in vivo from mismatched or misaligned primer ends. These misaligned primers can be extended by PolIV. Exhibits no 3'-5' exonuclease (proofreading) activity. May be involved in translesional synthesis, in conjunction with the beta clamp from PolIII. The polypeptide is DNA polymerase IV (Clostridium perfringens (strain ATCC 13124 / DSM 756 / JCM 1290 / NCIMB 6125 / NCTC 8237 / Type A)).